Here is a 208-residue protein sequence, read N- to C-terminus: Small ribosomal subunit protein uS4 (208 aa).

The tract at residues 32–53 is disordered; the sequence is LNRKRGKNSPGQHGASKVKMSD. One can recognise an S4 RNA-binding domain in the interval 99–161; sequence LRLDNVVYRL…YKSNVIIKKL (63 aa).

This sequence belongs to the universal ribosomal protein uS4 family. In terms of assembly, part of the 30S ribosomal subunit. Contacts protein S5. The interaction surface between S4 and S5 is involved in control of translational fidelity.

One of the primary rRNA binding proteins, it binds directly to 16S rRNA where it nucleates assembly of the body of the 30S subunit. In terms of biological role, with S5 and S12 plays an important role in translational accuracy. This Endomicrobium trichonymphae protein is Small ribosomal subunit protein uS4.